The following is a 262-amino-acid chain: Caffeyl-CoA reductase-Etf complex subunit CarD (262 aa).

This sequence belongs to the ETF beta-subunit/FixA family. As to quaternary structure, part of the homotrimeric caffeyl-CoA reductase-Etf complex composed of (R)-2-hydroxyisocaproyl-CoA dehydratase CarC, and the electron transfer flavoprotein (ETF) alpha (CarE) and beta (CarD) subunits. FAD is required as a cofactor. Requires AMP as cofactor.

The protein localises to the cytoplasm. It carries out the reaction hydrocaffeoyl-CoA + 2 reduced [2Fe-2S]-[ferredoxin] + 2 NAD(+) = (E)-caffeoyl-CoA + 2 oxidized [2Fe-2S]-[ferredoxin] + 2 NADH. Its function is as follows. Caffeyl-CoA reductase-Etf complex catalyzes the reduction of caffeyl-CoA to yield hydrocaffeyl-CoA. It couples the endergonic ferredoxin reduction with NADH as reductant to the exergonic reduction of caffeoyl-CoA with the same reductant. It uses the mechanism of electron bifurcation to overcome the steep energy barrier in ferredoxin reduction. The electron transfer flavoprotein (Etf) mediates the electron transfer between the different donors and acceptors. The complex can also reduce 4-coumaroyl-CoA and feruloyl-CoA. The protein is Caffeyl-CoA reductase-Etf complex subunit CarD of Acetobacterium woodii (strain ATCC 29683 / DSM 1030 / JCM 2381 / KCTC 1655 / WB1).